The following is a 306-amino-acid chain: Protoheme IX farnesyltransferase (306 aa).

8 helical membrane passes run 31–50 (VIELLLVTTAPVMILAQGGW), 55–77 (LILGVLVGGTLSAGSANAFNCYI), 104–124 (LVFAWIIGVASIIWLGVISNW), 125–145 (LAAALSLAAILFYVFVYTLWL), 168–188 (WAAVTGDISWAPVILFMIVFL), 218–235 (GRAAVGLQTILYSWATLA), 238–258 (LLLIPVAGMGLVYTLAALAGG), and 286–306 (ASISYLSLLFLAVGIDPLLPF).

This sequence belongs to the UbiA prenyltransferase family. Protoheme IX farnesyltransferase subfamily.

The protein resides in the cell membrane. It catalyses the reaction heme b + (2E,6E)-farnesyl diphosphate + H2O = Fe(II)-heme o + diphosphate. Its pathway is porphyrin-containing compound metabolism; heme O biosynthesis; heme O from protoheme: step 1/1. Functionally, converts heme B (protoheme IX) to heme O by substitution of the vinyl group on carbon 2 of heme B porphyrin ring with a hydroxyethyl farnesyl side group. This Clavibacter sepedonicus (Clavibacter michiganensis subsp. sepedonicus) protein is Protoheme IX farnesyltransferase.